The chain runs to 128 residues: Fluoride-specific ion channel FluC (128 aa).

4 helical membrane-spanning segments follow: residues 4 to 24, 39 to 59, 71 to 91, and 99 to 119; these read LLLA…RYLI, GTLI…EFSM, FLTT…YETI, and MTLG…FVVI. 2 residues coordinate Na(+): glycine 78 and threonine 81.

This sequence belongs to the fluoride channel Fluc/FEX (TC 1.A.43) family.

It localises to the cell membrane. It carries out the reaction fluoride(in) = fluoride(out). Its activity is regulated as follows. Na(+) is not transported, but it plays an essential structural role and its presence is essential for fluoride channel function. Functionally, fluoride-specific ion channel. Important for reducing fluoride concentration in the cell, thus reducing its toxicity. The protein is Fluoride-specific ion channel FluC of Clostridium perfringens (strain 13 / Type A).